Reading from the N-terminus, the 396-residue chain is Methionine import ATP-binding protein MetN 2 (396 aa).

An ABC transporter domain is found at 41–280 (VSFELVGKVF…PRHGATRALL (240 aa)). ATP is bound at residue 77–84 (GRSGAGKS).

This sequence belongs to the ABC transporter superfamily. Methionine importer (TC 3.A.1.24) family. As to quaternary structure, the complex is composed of two ATP-binding proteins (MetN), two transmembrane proteins (MetI) and a solute-binding protein (MetQ).

Its subcellular location is the cell inner membrane. It catalyses the reaction L-methionine(out) + ATP + H2O = L-methionine(in) + ADP + phosphate + H(+). The catalysed reaction is D-methionine(out) + ATP + H2O = D-methionine(in) + ADP + phosphate + H(+). Part of the ABC transporter complex MetNIQ involved in methionine import. Responsible for energy coupling to the transport system. This Burkholderia pseudomallei (strain K96243) protein is Methionine import ATP-binding protein MetN 2.